Reading from the N-terminus, the 920-residue chain is Isoleucine--tRNA ligase (920 aa).

The short motif at 57 to 67 (PYANGDIHLGH) is the 'HIGH' region element. Glu560 lines the L-isoleucyl-5'-AMP pocket. The short motif at 601-605 (KMSKS) is the 'KMSKS' region element. Residue Lys604 participates in ATP binding. Zn(2+) contacts are provided by Cys890, Cys893, Cys910, and Cys913.

This sequence belongs to the class-I aminoacyl-tRNA synthetase family. IleS type 1 subfamily. Monomer. Requires Zn(2+) as cofactor.

It localises to the cytoplasm. The catalysed reaction is tRNA(Ile) + L-isoleucine + ATP = L-isoleucyl-tRNA(Ile) + AMP + diphosphate. Its function is as follows. Catalyzes the attachment of isoleucine to tRNA(Ile). As IleRS can inadvertently accommodate and process structurally similar amino acids such as valine, to avoid such errors it has two additional distinct tRNA(Ile)-dependent editing activities. One activity is designated as 'pretransfer' editing and involves the hydrolysis of activated Val-AMP. The other activity is designated 'posttransfer' editing and involves deacylation of mischarged Val-tRNA(Ile). The chain is Isoleucine--tRNA ligase from Caldicellulosiruptor bescii (strain ATCC BAA-1888 / DSM 6725 / KCTC 15123 / Z-1320) (Anaerocellum thermophilum).